The sequence spans 582 residues: 5-aminolevulinate synthase, erythroid-specific, mitochondrial (582 aa).

A mitochondrion-targeting transit peptide spans 1–44 (MLLQRCPVLIRSPTAILGKMIKTHQFLIGIGRCPILATQGTTCS). Succinyl-CoA is bound at residue Arg158. The pyridoxal 5'-phosphate site is built by Cys253 and Phe254. Residues Ser275 and Lys294 each coordinate succinyl-CoA. Residues Ser327, His355, and Thr383 each coordinate pyridoxal 5'-phosphate. Lys386 is an active-site residue. Residue Lys386 is modified to N6-(pyridoxal phosphate)lysine. The pyridoxal 5'-phosphate site is built by Thr415 and Thr416. Thr503 serves as a coordination point for succinyl-CoA.

Belongs to the class-II pyridoxal-phosphate-dependent aminotransferase family. Homodimer. It depends on pyridoxal 5'-phosphate as a cofactor.

Its subcellular location is the mitochondrion inner membrane. The enzyme catalyses succinyl-CoA + glycine + H(+) = 5-aminolevulinate + CO2 + CoA. It functions in the pathway porphyrin-containing compound metabolism; protoporphyrin-IX biosynthesis; 5-aminolevulinate from glycine: step 1/1. In terms of biological role, catalyzes the pyridoxal 5'-phosphate (PLP)-dependent condensation of succinyl-CoA and glycine to form aminolevulinic acid (ALA), with CoA and CO2 as by-products. Contributes significantly to heme formation during erythropoiesis. This Delphinapterus leucas (Beluga whale) protein is 5-aminolevulinate synthase, erythroid-specific, mitochondrial (ALAS2).